A 281-amino-acid chain; its full sequence is MKIQRKPEWLRKKVPQGEQAAMRGLLSELKLNTVCQQALCPNIAECFGCGQATFLILGRDCTRQCSFCNVDKAPRPQAPDADEPRRLAEAVLRLKLSHVVITSPTRDDLADGGAGHYAATVAAVREVSPGTAVELLVPDFGGDHAALATVLAAQPSILAHNLETVPRLYEVRKGADYQRSLDLLQQAALRAPAIPTKSGIMLGLGEELDEVRAVLQDLRRVGCSYLSLGQYLAPSKRHQPVVAYIPPQQFDLLRDEALALGFRHVESGPYVRSSYHAANYA.

Positions 35, 40, 46, 61, 65, 68, and 274 each coordinate [4Fe-4S] cluster. The region spanning 47–263 (FGCGQATFLI…RDEALALGFR (217 aa)) is the Radical SAM core domain.

The protein belongs to the radical SAM superfamily. Lipoyl synthase family. [4Fe-4S] cluster is required as a cofactor.

It localises to the cytoplasm. The catalysed reaction is [[Fe-S] cluster scaffold protein carrying a second [4Fe-4S](2+) cluster] + N(6)-octanoyl-L-lysyl-[protein] + 2 oxidized [2Fe-2S]-[ferredoxin] + 2 S-adenosyl-L-methionine + 4 H(+) = [[Fe-S] cluster scaffold protein] + N(6)-[(R)-dihydrolipoyl]-L-lysyl-[protein] + 4 Fe(3+) + 2 hydrogen sulfide + 2 5'-deoxyadenosine + 2 L-methionine + 2 reduced [2Fe-2S]-[ferredoxin]. The protein operates within protein modification; protein lipoylation via endogenous pathway; protein N(6)-(lipoyl)lysine from octanoyl-[acyl-carrier-protein]: step 2/2. In terms of biological role, catalyzes the radical-mediated insertion of two sulfur atoms into the C-6 and C-8 positions of the octanoyl moiety bound to the lipoyl domains of lipoate-dependent enzymes, thereby converting the octanoylated domains into lipoylated derivatives. The chain is Lipoyl synthase from Trichlorobacter lovleyi (strain ATCC BAA-1151 / DSM 17278 / SZ) (Geobacter lovleyi).